The sequence spans 561 residues: MCGIWALFGSDDCLSVQCLSAMKIAHRGPDAFRFENVNGYTNCCFGFHRLAVVDPLFGMQPIRVKKYPYLWLCYNGEIYNHKKMQQHFEFEYQTKVDGEIILHLYDKGGIEQTICMLDGVFAFVLLDTATKKVFLGRDTYGVRPLFKAMTEDGFLAVCSEAKGLVTLKHSTTPFLKVEPFLPGHYEVLDLKPNGKVASVEMVKYHHCRDEPLHALYDNVEKLFPGFEIETVKNNLRILFNNAVKKRLMTDRRIGCLLSGGLDSSLVAATLLKQLKEARVQYPLQTFAIGMEDSPDLLAARKVADHIGSEHYEVLFNSEEGIQALDEVIFSLETYDITTVRASVGMYLISKYIRKNTDSVVIFSGEGSDELTQGYIYFHKAPSPEKAEEESERLLRELYLFDVLRADRTTAAHGLELRVPFLDHRFSSYYLSLPPEMRIPKNGIEKHLLRETFEDSNLIPKEILWRPKEAFSDGITSVKNSWFKILQEYVEHQVDDAMMANAAQKFPFNTPKTKEGYYYRQVFERHYPGRADWLSHYWMPKWINATDPSARTLTHYKSAVKA.

Cys2 functions as the For GATase activity in the catalytic mechanism. The Glutamine amidotransferase type-2 domain occupies 2–191; the sequence is CGIWALFGSD…PGHYEVLDLK (190 aa). Residues 49 to 53, 75 to 77, and Asp97 each bind L-glutamine; these read RLAVV and NGE. The Asparagine synthetase domain maps to 213-536; that stretch reads HALYDNVEKL…PGRADWLSHY (324 aa). ATP contacts are provided by residues Leu256, Ile288, and 363–364; that span reads SG. Position 385 is an N6-acetyllysine (Lys385). Phosphothreonine is present on Thr545. Ser557 carries the post-translational modification Phosphoserine.

It carries out the reaction L-aspartate + L-glutamine + ATP + H2O = L-asparagine + L-glutamate + AMP + diphosphate + H(+). It participates in amino-acid biosynthesis; L-asparagine biosynthesis; L-asparagine from L-aspartate (L-Gln route): step 1/1. This is Asparagine synthetase [glutamine-hydrolyzing] (ASNS) from Pongo abelii (Sumatran orangutan).